The following is a 237-amino-acid chain: Ribosomal RNA small subunit methyltransferase G (237 aa).

S-adenosyl-L-methionine-binding positions include Gly-78, Phe-83, 129–130 (AE), and Arg-148.

The protein belongs to the methyltransferase superfamily. RNA methyltransferase RsmG family.

The protein localises to the cytoplasm. Its function is as follows. Specifically methylates the N7 position of a guanine in 16S rRNA. The polypeptide is Ribosomal RNA small subunit methyltransferase G (Streptococcus pyogenes serotype M1).